The chain runs to 182 residues: UPF0301 protein MCA0413 1 (182 aa).

This sequence belongs to the UPF0301 (AlgH) family.

The protein is UPF0301 protein MCA0413 1 of Methylococcus capsulatus (strain ATCC 33009 / NCIMB 11132 / Bath).